Consider the following 193-residue polypeptide: Xanthine phosphoribosyltransferase (193 aa).

Xanthine-binding residues include Leu20 and Asn27. 129–133 is a 5-phospho-alpha-D-ribose 1-diphosphate binding site; sequence ANGKA. Residue Lys157 coordinates xanthine.

The protein belongs to the purine/pyrimidine phosphoribosyltransferase family. Xpt subfamily. As to quaternary structure, homodimer.

It localises to the cytoplasm. The enzyme catalyses XMP + diphosphate = xanthine + 5-phospho-alpha-D-ribose 1-diphosphate. Its pathway is purine metabolism; XMP biosynthesis via salvage pathway; XMP from xanthine: step 1/1. Functionally, converts the preformed base xanthine, a product of nucleic acid breakdown, to xanthosine 5'-monophosphate (XMP), so it can be reused for RNA or DNA synthesis. The chain is Xanthine phosphoribosyltransferase from Bifidobacterium longum subsp. infantis (strain ATCC 15697 / DSM 20088 / JCM 1222 / NCTC 11817 / S12).